We begin with the raw amino-acid sequence, 470 residues long: MLRAGKKTNSQTSTSNDACSLLYINVPDFNCNMSQIENYCIDRFNLLNEVSKLKDTLSAQKSNTSKDNEDFRNLSSRFLGSTKDEQFKIKDELSHYCLRLAMCDSTDRNWFITTESILLANRLNQSDLTTIISSFKGFGWSPVSQEEYEQYQDDLGYLVKKANLNLNEVNNTHFYKLPFQDIPKLIDTKKAIIIKGEAYIYISNFKDMVIHTFKNYMNFALDRIKADKTRIKEEFPELIQFFTTLPKAGDGTNKPQLGNTKHIRKEDVSPLSKTSFPMCMRVMYDSLVETSSLKYEGRLQFGTFLKGIGLPYDEAINFWRIAFSKRVSNTDFDKEYLYNIRHNYGLEGKSTNYSPYSCPRIISKSPHNGDKLVHGCPYIQSLERLEQKLLDLGIDDFQRIQILEATKTSPNVACTKHFNFLHPNNTLTKLINHPNQFYDQSMEYYKTLEEKKSAKQSNNKENENQSIDEK.

Positions 279, 358, 376, and 414 each coordinate [4Fe-4S] cluster. The interval 449–470 (EEKKSAKQSNNKENENQSIDEK) is disordered.

The protein belongs to the eukaryotic-type primase large subunit family. Heterodimer of a small subunit and a large subunit. Requires [4Fe-4S] cluster as cofactor.

Its function is as follows. DNA primase is the polymerase that synthesizes small RNA primers for the Okazaki fragments made during discontinuous DNA replication. The chain is DNA primase large subunit (prim2) from Dictyostelium discoideum (Social amoeba).